A 156-amino-acid chain; its full sequence is Ribosome maturation factor RimP (156 aa).

The protein belongs to the RimP family.

The protein resides in the cytoplasm. In terms of biological role, required for maturation of 30S ribosomal subunits. This Oenococcus oeni (strain ATCC BAA-331 / PSU-1) protein is Ribosome maturation factor RimP.